Reading from the N-terminus, the 336-residue chain is 3-isopropylmalate dehydrogenase (336 aa).

Residues arginine 87, arginine 97, arginine 121, and aspartate 211 each contribute to the substrate site. Positions 211, 235, and 239 each coordinate Mg(2+). Residue 271–283 (GSAPDIAGQGIAD) coordinates NAD(+).

This sequence belongs to the isocitrate and isopropylmalate dehydrogenases family. LeuB type 2 subfamily. Homodimer. It depends on Mg(2+) as a cofactor. Mn(2+) serves as cofactor.

The protein localises to the cytoplasm. The enzyme catalyses (2R,3S)-3-isopropylmalate + NAD(+) = 4-methyl-2-oxopentanoate + CO2 + NADH. It functions in the pathway amino-acid biosynthesis; L-leucine biosynthesis; L-leucine from 3-methyl-2-oxobutanoate: step 3/4. Catalyzes the oxidation of 3-carboxy-2-hydroxy-4-methylpentanoate (3-isopropylmalate) to 3-carboxy-4-methyl-2-oxopentanoate. The product decarboxylates to 4-methyl-2 oxopentanoate. This is 3-isopropylmalate dehydrogenase from Mycobacterium bovis (strain ATCC BAA-935 / AF2122/97).